A 586-amino-acid polypeptide reads, in one-letter code: 2-succinyl-5-enolpyruvyl-6-hydroxy-3-cyclohexene-1-carboxylate synthase (586 aa).

This sequence belongs to the TPP enzyme family. MenD subfamily. In terms of assembly, homodimer. It depends on Mg(2+) as a cofactor. Mn(2+) serves as cofactor. Thiamine diphosphate is required as a cofactor.

It catalyses the reaction isochorismate + 2-oxoglutarate + H(+) = 5-enolpyruvoyl-6-hydroxy-2-succinyl-cyclohex-3-ene-1-carboxylate + CO2. It functions in the pathway quinol/quinone metabolism; 1,4-dihydroxy-2-naphthoate biosynthesis; 1,4-dihydroxy-2-naphthoate from chorismate: step 2/7. It participates in quinol/quinone metabolism; menaquinone biosynthesis. Functionally, catalyzes the thiamine diphosphate-dependent decarboxylation of 2-oxoglutarate and the subsequent addition of the resulting succinic semialdehyde-thiamine pyrophosphate anion to isochorismate to yield 2-succinyl-5-enolpyruvyl-6-hydroxy-3-cyclohexene-1-carboxylate (SEPHCHC). In Geobacillus thermodenitrificans (strain NG80-2), this protein is 2-succinyl-5-enolpyruvyl-6-hydroxy-3-cyclohexene-1-carboxylate synthase.